The primary structure comprises 616 residues: Methionine--tRNA ligase, chloroplastic/mitochondrial (616 aa).

A 'HIGH' region motif is present at residues 78–88; the sequence is YYVNAPPHMGS. A 'KMSKS' region motif is present at residues 366–370; the sequence is KMGKS. Lys-369 is a binding site for ATP. Positions 582–593 are enriched in basic and acidic residues; the sequence is LNPEKEEDEKKP. A disordered region spans residues 582–602; it reads LNPEKEEDEKKPKVGKKTGKA.

The protein belongs to the class-I aminoacyl-tRNA synthetase family.

It is found in the plastid. The protein localises to the chloroplast. It localises to the mitochondrion. It catalyses the reaction tRNA(Met) + L-methionine + ATP = L-methionyl-tRNA(Met) + AMP + diphosphate. This Arabidopsis thaliana (Mouse-ear cress) protein is Methionine--tRNA ligase, chloroplastic/mitochondrial.